The primary structure comprises 246 residues: ATP synthase subunit a, chloroplastic (246 aa).

5 consecutive transmembrane segments (helical) span residues 33-53 (VHGQ…GFGL), 99-119 (TIFL…WALI), 133-153 (INTT…AGIN), 201-221 (GVLV…LGLF), and 222-242 (TSAI…GESL).

The protein belongs to the ATPase A chain family. In terms of assembly, F-type ATPases have 2 components, CF(1) - the catalytic core - and CF(0) - the membrane proton channel. CF(1) has five subunits: alpha(3), beta(3), gamma(1), delta(1), epsilon(1). CF(0) has four main subunits: a, b, b' and c.

It is found in the plastid. It localises to the chloroplast thylakoid membrane. In terms of biological role, key component of the proton channel; it plays a direct role in the translocation of protons across the membrane. The protein is ATP synthase subunit a, chloroplastic of Oltmannsiellopsis viridis (Marine flagellate).